Reading from the N-terminus, the 394-residue chain is NAD(P)H-quinone oxidoreductase subunit H (394 aa).

Belongs to the complex I 49 kDa subunit family. In terms of assembly, NDH-1 can be composed of about 15 different subunits; different subcomplexes with different compositions have been identified which probably have different functions. The initiator methionine has been seen to be kept and removed.

Its subcellular location is the cellular thylakoid membrane. It catalyses the reaction a plastoquinone + NADH + (n+1) H(+)(in) = a plastoquinol + NAD(+) + n H(+)(out). The enzyme catalyses a plastoquinone + NADPH + (n+1) H(+)(in) = a plastoquinol + NADP(+) + n H(+)(out). In terms of biological role, NDH-1 shuttles electrons from an unknown electron donor, via FMN and iron-sulfur (Fe-S) centers, to quinones in the respiratory and/or the photosynthetic chain. The immediate electron acceptor for the enzyme in this species is believed to be plastoquinone. Couples the redox reaction to proton translocation, and thus conserves the redox energy in a proton gradient. Cyanobacterial NDH-1 also plays a role in inorganic carbon-concentration. This Synechocystis sp. (strain ATCC 27184 / PCC 6803 / Kazusa) protein is NAD(P)H-quinone oxidoreductase subunit H (ndhH).